We begin with the raw amino-acid sequence, 270 residues long: Putative phosphoenolpyruvate synthase regulatory protein (270 aa).

151–158 (GVSRCGKT) contributes to the ADP binding site.

The protein belongs to the pyruvate, phosphate/water dikinase regulatory protein family. PSRP subfamily.

The enzyme catalyses [pyruvate, water dikinase] + ADP = [pyruvate, water dikinase]-phosphate + AMP + H(+). It catalyses the reaction [pyruvate, water dikinase]-phosphate + phosphate + H(+) = [pyruvate, water dikinase] + diphosphate. Functionally, bifunctional serine/threonine kinase and phosphorylase involved in the regulation of the phosphoenolpyruvate synthase (PEPS) by catalyzing its phosphorylation/dephosphorylation. This chain is Putative phosphoenolpyruvate synthase regulatory protein, found in Methylobacillus flagellatus (strain ATCC 51484 / DSM 6875 / VKM B-1610 / KT).